The chain runs to 345 residues: Protein D345L (345 aa).

This sequence belongs to the asfivirus D345L family. Interacts with IKKA/CHUK and IKBKB.

It localises to the host cytoplasm. Functionally, plays a role in the negative regulation of host NF-kappa-B signaling pathway. Mechanistically, recruits IKKA/CHUK and IKBKB to suppress their kinase activity towards NFKBIA. This is Protein D345L from African swine fever virus (isolate Tick/South Africa/Pretoriuskop Pr4/1996) (ASFV).